Consider the following 121-residue polypeptide: Small ribosomal subunit protein uS13 (121 aa).

The segment at 97–121 (VRGQRTRTNARTRRGARKTVAGRKK) is disordered. A compositionally biased stretch (basic residues) spans 100–121 (QRTRTNARTRRGARKTVAGRKK).

It belongs to the universal ribosomal protein uS13 family. As to quaternary structure, part of the 30S ribosomal subunit. Forms a loose heterodimer with protein S19. Forms two bridges to the 50S subunit in the 70S ribosome.

Functionally, located at the top of the head of the 30S subunit, it contacts several helices of the 16S rRNA. In the 70S ribosome it contacts the 23S rRNA (bridge B1a) and protein L5 of the 50S subunit (bridge B1b), connecting the 2 subunits; these bridges are implicated in subunit movement. Contacts the tRNAs in the A and P-sites. In Prochlorococcus marinus (strain NATL1A), this protein is Small ribosomal subunit protein uS13.